Consider the following 127-residue polypeptide: Major sperm protein 19/31/40/45/50/51/53/59/61/65/81/113/142 (127 aa).

At Ala-2 the chain carries N-acetylalanine. The MSP domain maps to Asp-9–Asn-126.

Helical subfilaments are built from MSP dimers; filaments are formed from two subfilaments coiling round one another; and filaments themselves supercoil to produce bundles. In terms of tissue distribution, sperm.

It localises to the cell projection. It is found in the pseudopodium. The protein resides in the cytoplasm. Its subcellular location is the cytoskeleton. Its function is as follows. Central component in molecular interactions underlying sperm crawling. Forms an extensive filament system that extends from sperm villipoda, along the leading edge of the pseudopod. The chain is Major sperm protein 19/31/40/45/50/51/53/59/61/65/81/113/142 (msp-19) from Caenorhabditis elegans.